Reading from the N-terminus, the 590-residue chain is MGEELKTLKRTCMCGGLTEANIGDKITVMGWVQRKRNLGGLVFVDLRDRTGILQIVFGEAINKEAFEKSDSVKSEYCIAAVGTIVKRESPNMEIPTGMVELKGEYIKIFSESETPPIYIKENLDAAENIRLKYRYLDLRRPDMQRIFMLRHKTAKVIRDFLDEQGFLEIETPILGKSTPEGARDYLVPSRNYKGKYYALPQSPQLFKQLLMVSGYDRYFQIAKCFRDEDLRANRQPEFTQVDMEISFVDQEEVMDLNERLIQRVFKQILDVDVKLPIERMTYKTAMDKYGSDKPDLRFGMEINDISEVVKGVDFKVFQNALENGGSVRAIKVTGSAALGRKQLDKLVEFVKTYGASGLIWMAYKKEGIKCSISKFLTEEDTQNILNKMEAAEGDLILIVADKNKVVFESLGALRIHMAKQTGILEGNNDFKFVWITEFPLLSYNEEENRYQAEHHPFVMPMDEDIQYLESNPEKVRAKAYDIVLNGEELGGGSIRIHDTKLQEKMFGAIGISKDTAWNKFGYFLEALKFGPPPHGGLAYGFDRMIMFLAGTDNIKDVIAFPKNQNAFCPLTEAPNSVDKSQLKDLGIEVK.

Glutamate 180 is an L-aspartate binding site. Positions 204-207 (QLFK) are aspartate. Residue arginine 226 participates in L-aspartate binding. ATP-binding positions include 226-228 (RDE) and glutamine 235. Histidine 454 is a binding site for L-aspartate. Residue glutamate 488 coordinates ATP. Residue arginine 495 coordinates L-aspartate. ATP is bound at residue 540–543 (GFDR).

Belongs to the class-II aminoacyl-tRNA synthetase family. Type 1 subfamily. In terms of assembly, homodimer.

The protein localises to the cytoplasm. It catalyses the reaction tRNA(Asp) + L-aspartate + ATP = L-aspartyl-tRNA(Asp) + AMP + diphosphate. Its function is as follows. Catalyzes the attachment of L-aspartate to tRNA(Asp) in a two-step reaction: L-aspartate is first activated by ATP to form Asp-AMP and then transferred to the acceptor end of tRNA(Asp). This chain is Aspartate--tRNA ligase, found in Clostridium kluyveri (strain NBRC 12016).